We begin with the raw amino-acid sequence, 123 residues long: Defensin beta 118 (123 aa).

An N-terminal signal peptide occupies residues 1–19 (MKLLLLALPMLVLLPQVIP). 3 disulfides stabilise this stretch: Cys27–Cys54, Cys34–Cys48, and Cys38–Cys55. A propeptide spanning residues 65 to 123 (VPATSPTPLSDSTPGIIDDILTVRFTTDYFEVSSKKDMVEESEAGRGTETSLPNVHHSS) is cleaved from the precursor. Over residues 100 to 110 (KDMVEESEAGR) the composition is skewed to basic and acidic residues. The segment at 100–123 (KDMVEESEAGRGTETSLPNVHHSS) is disordered. Over residues 112 to 123 (TETSLPNVHHSS) the composition is skewed to polar residues.

Belongs to the beta-defensin family. In terms of processing, the three-dimensional structure formed by the three intramolecular disulfide bridges is indispensable for antimicrobial activity. As to expression, high-level and epididymis-specific expression. Most abundant in the epithelium of the caput and present in the epididymis lumen and bound to sperm. Also expressed in pancreas.

The protein resides in the secreted. Its function is as follows. Host defense peptide that exhibits antimicrobial activity against both Gram-negative bacteria, such as E.coli and S.typhimurium, and Gram-positive bacteria, such as S.aureus and B.subtilis. Inhibits cell adhesion of E.coli on intestinal epithelial enterocytes. Causes rapid permeabilization of both the outer and inner membrane of E.coli, leading to morphological alterations on the bacterial surface. Binds to bacterial lipopolysaccharides (LPS) with high affinity, and may thereby be involved in immunoregulation through LPS neutralization. May contribute to epididymal innate immunity and protect the sperm against attack by microorganisms. The chain is Defensin beta 118 (DEFB118) from Homo sapiens (Human).